Here is a 374-residue protein sequence, read N- to C-terminus: DNA replication and repair protein RecF (374 aa).

Residue Gly34–Thr41 participates in ATP binding.

Belongs to the RecF family.

It is found in the cytoplasm. Its function is as follows. The RecF protein is involved in DNA metabolism; it is required for DNA replication and normal SOS inducibility. RecF binds preferentially to single-stranded, linear DNA. It also seems to bind ATP. In Rhizobium etli (strain CIAT 652), this protein is DNA replication and repair protein RecF.